The sequence spans 171 residues: 3-hydroxydecanoyl-[acyl-carrier-protein] dehydratase (171 aa).

Residue histidine 71 is part of the active site.

This sequence belongs to the thioester dehydratase family. FabA subfamily. As to quaternary structure, homodimer.

The protein resides in the cytoplasm. The enzyme catalyses a (3R)-hydroxyacyl-[ACP] = a (2E)-enoyl-[ACP] + H2O. It carries out the reaction (3R)-hydroxydecanoyl-[ACP] = (2E)-decenoyl-[ACP] + H2O. The catalysed reaction is (2E)-decenoyl-[ACP] = (3Z)-decenoyl-[ACP]. It functions in the pathway lipid metabolism; fatty acid biosynthesis. Necessary for the introduction of cis unsaturation into fatty acids. Catalyzes the dehydration of (3R)-3-hydroxydecanoyl-ACP to E-(2)-decenoyl-ACP and then its isomerization to Z-(3)-decenoyl-ACP. Can catalyze the dehydratase reaction for beta-hydroxyacyl-ACPs with saturated chain lengths up to 16:0, being most active on intermediate chain length. The chain is 3-hydroxydecanoyl-[acyl-carrier-protein] dehydratase from Sinorhizobium medicae (strain WSM419) (Ensifer medicae).